Reading from the N-terminus, the 415-residue chain is Citrate (Re)-synthase (415 aa).

The Pyruvate carboxyltransferase domain maps to 4–275 (IFIIDVTNRD…GHEVDLSKAW (272 aa)).

The protein belongs to the alpha-IPM synthase/homocitrate synthase family. It depends on Mn(2+) as a cofactor.

It catalyses the reaction oxaloacetate + acetyl-CoA + H2O = citrate + CoA + H(+). Inhibited by citrate and under aerobic conditions. In terms of biological role, catalyzes the condensation of the acetyl group of acetyl coenzyme A (acetyl-CoA) with oxaloacetate to form citrate. This enzyme is highly Re-face stereospecific with respect to the C-2 of oxaloacetate. The chain is Citrate (Re)-synthase from Dehalococcoides mccartyi (strain CBDB1).